The following is a 458-amino-acid chain: UDP-N-acetylmuramoylalanine--D-glutamate ligase (458 aa).

118–124 (GTNGKTT) provides a ligand contact to ATP.

The protein belongs to the MurCDEF family.

It localises to the cytoplasm. It carries out the reaction UDP-N-acetyl-alpha-D-muramoyl-L-alanine + D-glutamate + ATP = UDP-N-acetyl-alpha-D-muramoyl-L-alanyl-D-glutamate + ADP + phosphate + H(+). Its pathway is cell wall biogenesis; peptidoglycan biosynthesis. Cell wall formation. Catalyzes the addition of glutamate to the nucleotide precursor UDP-N-acetylmuramoyl-L-alanine (UMA). This Ligilactobacillus salivarius (strain UCC118) (Lactobacillus salivarius) protein is UDP-N-acetylmuramoylalanine--D-glutamate ligase.